A 469-amino-acid polypeptide reads, in one-letter code: Origin recognition complex subunit 6 (469 aa).

Low complexity-rich tracts occupy residues Ser-218–Lys-234 and Ala-275–Thr-308. 4 disordered regions span residues Ser-218 to Ser-241, Ala-275 to Asn-309, Glu-356 to Leu-423, and Lys-436 to Lys-469. Composition is skewed to basic and acidic residues over residues Ser-380–Leu-390 and Gln-409–Leu-423. Residues Thr-454–Lys-469 are compositionally biased toward polar residues.

Belongs to the ORC6 family. As to quaternary structure, ORC is composed of six subunits.

The protein resides in the nucleus. Functionally, component of the origin recognition complex (ORC) that binds origins of replication. DNA-binding is ATP-dependent, however specific DNA sequences that define origins of replication have not been identified so far. ORC is required to assemble the pre-replication complex necessary to initiate DNA replication. This chain is Origin recognition complex subunit 6 (orcF), found in Dictyostelium discoideum (Social amoeba).